We begin with the raw amino-acid sequence, 171 residues long: Endoribonuclease YbeY (171 aa).

His-130, His-134, and His-140 together coordinate Zn(2+).

This sequence belongs to the endoribonuclease YbeY family. Requires Zn(2+) as cofactor.

The protein localises to the cytoplasm. In terms of biological role, single strand-specific metallo-endoribonuclease involved in late-stage 70S ribosome quality control and in maturation of the 3' terminus of the 16S rRNA. In Neisseria meningitidis serogroup A / serotype 4A (strain DSM 15465 / Z2491), this protein is Endoribonuclease YbeY.